Reading from the N-terminus, the 493-residue chain is Glutamate--tRNA ligase (493 aa).

Positions 10 to 20 (PSPTGDPHVGT) match the 'HIGH' region motif. Zn(2+)-binding residues include cysteine 107, cysteine 109, cysteine 134, and histidine 136. The 'KMSKS' region signature appears at 251–255 (KLSKR). Lysine 254 is a binding site for ATP.

The protein belongs to the class-I aminoacyl-tRNA synthetase family. Glutamate--tRNA ligase type 1 subfamily. As to quaternary structure, monomer. Zn(2+) serves as cofactor.

Its subcellular location is the cytoplasm. It carries out the reaction tRNA(Glu) + L-glutamate + ATP = L-glutamyl-tRNA(Glu) + AMP + diphosphate. Catalyzes the attachment of glutamate to tRNA(Glu) in a two-step reaction: glutamate is first activated by ATP to form Glu-AMP and then transferred to the acceptor end of tRNA(Glu). This is Glutamate--tRNA ligase from Ectopseudomonas mendocina (strain ymp) (Pseudomonas mendocina).